A 743-amino-acid chain; its full sequence is DEAD-box ATP-dependent RNA helicase 3B, chloroplastic (743 aa).

Residues 1–37 (MASLTLPALALALSNPGAVRLRAAAFRCWALRRRGWA) constitute a chloroplast transit peptide. The interval 60–79 (GSDDEDGEGPYGSDADEGFE) is disordered. Acidic residues predominate over residues 61–79 (SDDEDGEGPYGSDADEGFE). A Q motif motif is present at residues 88–116 (LAIARLGLPDELVATLEKRGITHLFPIQR). Residues 119–295 (LIPALEGRDL…RRYLNNPLTI (177 aa)) form the Helicase ATP-binding domain. 132–139 (AKTGTGKT) lines the ATP pocket. Positions 243–246 (DEAD) match the DEAD box motif. In terms of domain architecture, Helicase C-terminal spans 324–469 (VLSDLITVYA…ISPPSIEEVL (146 aa)). Residues 606–719 (LTKISKLPAL…RSSSFGGRES (114 aa)) are disordered. Residues 642–653 (GGGASRGRGGWD) are compositionally biased toward gly residues. The span at 657–671 (EDRFRRGGRSLRSDN) shows a compositional bias: basic and acidic residues. Residues 688–719 (RSSSFGSRSSSYSSRGSPSFGGRSSSFGGRES) show a composition bias toward low complexity. The CCHC-type zinc finger occupies 725–742 (GACFNCGESGHRATDCPN).

The protein belongs to the DEAD box helicase family. DDX21/DDX50 subfamily.

It localises to the plastid. The protein localises to the chloroplast stroma. The enzyme catalyses ATP + H2O = ADP + phosphate + H(+). Its function is as follows. Nuclear genome-encoded factor involved in ribosome biogenesis in chloroplasts. Binds specific group II introns in chloroplasts and facilitates their splicing. Is required for rRNA maturation in plastids and may contribute to the assembly of the large (50S) ribosomal subunit. Required for normal development of chloroplasts. The sequence is that of DEAD-box ATP-dependent RNA helicase 3B, chloroplastic from Zea mays (Maize).